The chain runs to 188 residues: Pyridoxal 5'-phosphate synthase subunit PdxT (188 aa).

Residue 47 to 49 (GES) participates in L-glutamine binding. The active-site Nucleophile is the Cys79. Residues Arg106 and 134-135 (IR) each bind L-glutamine. Catalysis depends on charge relay system residues His169 and Glu171.

Belongs to the glutaminase PdxT/SNO family. As to quaternary structure, in the presence of PdxS, forms a dodecamer of heterodimers. Only shows activity in the heterodimer.

It carries out the reaction aldehydo-D-ribose 5-phosphate + D-glyceraldehyde 3-phosphate + L-glutamine = pyridoxal 5'-phosphate + L-glutamate + phosphate + 3 H2O + H(+). The catalysed reaction is L-glutamine + H2O = L-glutamate + NH4(+). It participates in cofactor biosynthesis; pyridoxal 5'-phosphate biosynthesis. Functionally, catalyzes the hydrolysis of glutamine to glutamate and ammonia as part of the biosynthesis of pyridoxal 5'-phosphate. The resulting ammonia molecule is channeled to the active site of PdxS. In Caldicellulosiruptor bescii (strain ATCC BAA-1888 / DSM 6725 / KCTC 15123 / Z-1320) (Anaerocellum thermophilum), this protein is Pyridoxal 5'-phosphate synthase subunit PdxT.